The chain runs to 289 residues: 7-methylguanosine phosphate-specific 5'-nucleotidase (289 aa).

The Nucleophile role is filled by Asp38. Residues Asp38 and Asp40 each coordinate Mg(2+). The active-site Proton donor is Asp40. A CMP-binding site is contributed by Glu85. Glu85 lines the N(7)-methyl-GMP pocket. Residues 153-154 (SA) and Lys202 each bind substrate. Residue Asp227 coordinates Mg(2+).

This sequence belongs to the pyrimidine 5'-nucleotidase family. In terms of assembly, monomer.

Its subcellular location is the cytoplasm. It carries out the reaction N(7)-methyl-GMP + H2O = N(7)-methylguanosine + phosphate. The catalysed reaction is CMP + H2O = cytidine + phosphate. It catalyses the reaction a ribonucleoside 5'-phosphate + H2O = a ribonucleoside + phosphate. Its function is as follows. Specifically hydrolyzes 7-methylguanosine monophosphate (m(7)GMP) to 7-methylguanosine and inorganic phosphate. The specific activity for m(7)GMP may protect cells against undesired salvage of m(7)GMP and its incorporation into nucleic acids. Also has weak activity for CMP. UMP and purine nucleotides are poor substrates. This chain is 7-methylguanosine phosphate-specific 5'-nucleotidase (NT5C3B), found in Gallus gallus (Chicken).